Reading from the N-terminus, the 615-residue chain is Delta(14)-sterol reductase LBR (615 aa).

The Tudor domain occupies 1-62; it reads MPSRKFADGE…DIKPLTSFRQ (62 aa). At 1 to 211 the chain is on the nuclear side; that stretch reads MPSRKFADGE…IRAKDLEFGG (211 aa). The interval 52-109 is disordered; the sequence is NDIKPLTSFRQRKGGSTSSSPSRRRGSRSRSRSRSPGRPPKSARRSASASHQADIKEA. Lys-55 is subject to N6-acetyllysine. Position 58 is a phosphothreonine (Thr-58). Phosphoserine is present on residues Ser-59 and Ser-67. Phosphoserine; by CDK1 occurs at positions 71 and 86. Residues 73 to 86 are compositionally biased toward basic residues; it reads SRRRGSRSRSRSRS. Phosphoserine occurs at positions 97 and 99. Thr-118 carries the phosphothreonine modification. Residue Ser-128 is modified to Phosphoserine. Thr-200 carries the phosphothreonine modification. 8 consecutive transmembrane segments (helical) span residues 212–232, 258–278, 299–319, 326–346, 386–406, 447–467, 481–501, and 561–581; these read VPGV…LLLM, VFGV…LPIG, FYAF…GVEF, FLQF…YLYM, FCEL…MLLA, IIHD…VPFI, EVSW…YVIF, and PCGF…MLLV. N6-acetyllysine is present on residues Lys-594 and Lys-601.

The protein belongs to the ERG4/ERG24 family. In terms of assembly, interacts with CBX5. Interacts with DNA. Interaction with DNA is sequence independent with higher affinity for supercoiled and relaxed circular DNA than linear DNA. Interacts with lamin B. Interacts with CLNK. Interacts with TMEM147; promoting LBR localization to the nucleus inner membrane. In terms of processing, phosphorylated by CDK1 in mitosis when the inner nuclear membrane breaks down into vesicles that dissociate from the lamina and the chromatin. It is phosphorylated by different protein kinases in interphase when the membrane is associated with these structures. Phosphorylation of LBR and HP1 proteins may be responsible for some of the alterations in chromatin organization and nuclear structure which occur at various times during the cell cycle. Phosphorylated by SRPK1. In late anaphase LBR is dephosphorylated, probably by PP1 and/or PP2A, allowing reassociation with chromatin. In terms of tissue distribution, expressed in the bone marrow, liver, heart, adrenal gland, lung, placenta and uterus. Expressed in osteoclasts and osteoblast-like cells.

The protein localises to the nucleus inner membrane. The protein resides in the endoplasmic reticulum membrane. It is found in the cytoplasm. Its subcellular location is the nucleus. It carries out the reaction 5alpha-cholest-8,14-dien-3beta-ol + NADPH + H(+) = 5alpha-cholest-8-en-3beta-ol + NADP(+). The enzyme catalyses 4,4-dimethyl-5alpha-cholesta-8,24-dien-3beta-ol + NADP(+) = 4,4-dimethyl-5alpha-cholesta-8,14,24-trien-3beta-ol + NADPH + H(+). It catalyses the reaction 4,4-dimethyl-8,14-cholestadien-3beta-ol + NADPH + H(+) = 4,4-dimethyl-5alpha-cholest-8-en-3beta-ol + NADP(+). Its pathway is steroid biosynthesis; cholesterol biosynthesis. Its function is as follows. Catalyzes the reduction of the C14-unsaturated bond of lanosterol, as part of the metabolic pathway leading to cholesterol biosynthesis. Plays a critical role in myeloid cell cholesterol biosynthesis which is essential to both myeloid cell growth and functional maturation. Mediates the activation of NADPH oxidases, perhaps by maintaining critical levels of cholesterol required for membrane lipid raft formation during neutrophil differentiation. Anchors the lamina and the heterochromatin to the inner nuclear membrane. The sequence is that of Delta(14)-sterol reductase LBR (LBR) from Homo sapiens (Human).